The following is a 500-amino-acid chain: Glycerol kinase (500 aa).

T11 is an ADP binding site. 3 residues coordinate ATP: T11, T12, and S13. T11 contributes to the sn-glycerol 3-phosphate binding site. R15 serves as a coordination point for ADP. R81, E82, Y133, and D242 together coordinate sn-glycerol 3-phosphate. Residues R81, E82, Y133, D242, and Q243 each contribute to the glycerol site. Residues T264 and G307 each coordinate ADP. Residues T264, G307, Q311, and G411 each contribute to the ATP site. G411 is an ADP binding site.

The protein belongs to the FGGY kinase family.

The catalysed reaction is glycerol + ATP = sn-glycerol 3-phosphate + ADP + H(+). Its pathway is polyol metabolism; glycerol degradation via glycerol kinase pathway; sn-glycerol 3-phosphate from glycerol: step 1/1. With respect to regulation, inhibited by fructose 1,6-bisphosphate (FBP). Its function is as follows. Key enzyme in the regulation of glycerol uptake and metabolism. Catalyzes the phosphorylation of glycerol to yield sn-glycerol 3-phosphate. This is Glycerol kinase from Rhodopseudomonas palustris (strain ATCC BAA-98 / CGA009).